The chain runs to 504 residues: MAKAATPKETAAAKKPAAPKKAASAKTVVAATGAVGRVTQVIGAVVDVAFEEGQLPQILNALETDNNGNRLVLEVAQHLGENSVRTIAMDSTEGLVRGQKVADTGGPIAVPVGKETLGRIMNVIGEPVDEAGPLKTSARRAIHQEAPAYVDQSTEAQILVTGIKVVDLLAPYAKGGKIGLFGGAGVGKTVLIMELINNVAKAHGGYSVFAGVGERTREGNDLYHEMIESGVNKHGGGEGSKAALVYGQMNEPPGARARVALTGLTVAEQFRDEGQDVLFFVDNIFRFTQAGSEVSALLGRIPSAVGYQPTLATDMGQMQERITTTTKGSITSVQAIYVPADDLTDPAPATSFAHLDATTVLSRSIAEKGIYPAVDPLDSTSRMLDPMIVGEEHYEVSRKVQSTLQRYKALQDIIAILGMDELSEEDKIAVARARKIERFLSQPFFVAEVFTGSPGKLVALEDTIKGFKGLVNGEYDHLPEAAFYMVGSIEEAVEKAKKLAAEAA.

Residues 1 to 23 (MAKAATPKETAAAKKPAAPKKAA) form a disordered region. 182 to 189 (GGAGVGKT) is an ATP binding site.

Belongs to the ATPase alpha/beta chains family. As to quaternary structure, F-type ATPases have 2 components, CF(1) - the catalytic core - and CF(0) - the membrane proton channel. CF(1) has five subunits: alpha(3), beta(3), gamma(1), delta(1), epsilon(1). CF(0) has three main subunits: a(1), b(2) and c(9-12). The alpha and beta chains form an alternating ring which encloses part of the gamma chain. CF(1) is attached to CF(0) by a central stalk formed by the gamma and epsilon chains, while a peripheral stalk is formed by the delta and b chains.

It is found in the cell inner membrane. It catalyses the reaction ATP + H2O + 4 H(+)(in) = ADP + phosphate + 5 H(+)(out). Its function is as follows. Produces ATP from ADP in the presence of a proton gradient across the membrane. The catalytic sites are hosted primarily by the beta subunits. The polypeptide is ATP synthase subunit beta (Rhizobium meliloti (strain 1021) (Ensifer meliloti)).